We begin with the raw amino-acid sequence, 121 residues long: Large ribosomal subunit protein bL21 (121 aa).

The protein belongs to the bacterial ribosomal protein bL21 family. Part of the 50S ribosomal subunit. Contacts protein L20.

This protein binds to 23S rRNA in the presence of protein L20. The protein is Large ribosomal subunit protein bL21 of Gloeobacter violaceus (strain ATCC 29082 / PCC 7421).